Reading from the N-terminus, the 339-residue chain is Large ribosomal subunit protein uL29 (339 aa).

The interval 1–96 is large ribosomal subunit protein uL29; it reads MNDLTKKSVE…FAKQRKAKIE (96 aa). The interval 97–339 is unknown; it reads QMMAEQQAAE…KTTKKGTGKK (243 aa). 2 disordered regions span residues 129–254 and 311–339; these read VVST…VPTK and KENR…TGKK. Over residues 145 to 156 the composition is skewed to low complexity; it reads APVAAKKPAAAK. Basic and acidic residues predominate over residues 157–170; the sequence is DFPKQKDVVEEKTA. Low complexity predominate over residues 171-182; the sequence is TGKPAAPSAKKA. Positions 185-210 are enriched in basic and acidic residues; the sequence is AKKDVAQETKTDKDAALKALIKEKAA. Low complexity predominate over residues 217-238; that stretch reads KSKTSTPSGKTTVTVKSVTSAK. Basic and acidic residues predominate over residues 239 to 248; that stretch reads ADIEVPKETS.

This sequence belongs to the universal ribosomal protein uL29 family. Forms homomultimers. Part of the ribosome; radioactive IRS binds to purified ribosomes.

In terms of biological role, specifically binds a DNA inverted repeat sequence (IRS) found downstream of rpsB in one of the ribosomal subunit operons (for genes rpsB, tsf, and unknown gene x). Might be involved in regulation of transcription of the rpsB operon; the IRS may be a control element to attenuate transcription. The protein is Large ribosomal subunit protein uL29 of Spiroplasma citri.